Consider the following 455-residue polypeptide: Regulatory protein LuxO (455 aa).

The region spanning 1 to 112 (MVEDTASVAA…RLRVTVNNAI (112 aa)) is the Response regulatory domain. 4-aspartylphosphate is present on aspartate 47. Positions 132–361 (FIGSSQTMQA…LQNVLRNVVV (230 aa)) constitute a Sigma-54 factor interaction domain. ATP is bound by residues 160-167 (GESGTGKE) and 223-232 (ADGGTLFLDE).

Involved in the regulation of different processes depending on the cell density. Acts together with sigma-54 to repress, perhaps indirectly, some genes. This Vibrio cholerae serotype O1 (strain ATCC 39315 / El Tor Inaba N16961) protein is Regulatory protein LuxO (luxO).